A 124-amino-acid chain; its full sequence is Photoactive yellow protein (124 aa).

The PAS domain occupies 22–85 (AESLPFGAVL…GEFLKFNRTG (64 aa)). S-(4-hydroxycinnamyl)cysteine is present on Cys-68.

It belongs to the photoactive yellow protein family. In terms of processing, the 4-hydroxycinnamic acid (p-coumaric acid) chromophore is covalently bound via a thioester linkage.

Its function is as follows. This photoactive protein is a photoreceptor with kinetics similar to that of rhodopsin. The chain is Photoactive yellow protein (pyp) from Rhodobacter capsulatus (strain ATCC BAA-309 / NBRC 16581 / SB1003).